Here is a 1715-residue protein sequence, read N- to C-terminus: MRSSFLVSNPPFLPSLIPRYSSRKSIRRSRERFSFPESLRVSLLHGIRRNIEVAQGVQFDGPIMDRDVNLDDDLVVQVCVTRTLPPALTLELGLESLKEAIDELKTNPPKSSSGVLRFQVAVPPRAKALFWFCSQPTTSDVFPVFFLSKDTVEPSYKSLYVKEPHGVFGIGNAFAFVHSSSVDSNGHSMIKTFLSDESAMVTAYGFPDIEFNKYSTVNSKDGSSYFFVPQIELDEHEEVSILAVTLAWNESLSYTVEQTISSYEKSIFQVSSHFCPNVEDHWFKHLKSSLAKLSVEEIHPLEMEHMGFFTFSGRDQADVKELKSIQSSCQFHCKLSPDVVFSNNMLNRETEVSNFLRDEANINAVWASAIIEECTRLGLTYFCVAPGSRSSHLAIAAANHPLTTCLACFDERSLAFHAIGYAKGSLKPAVIITSSGTAVSNLLPAVVEASEDFLPLLLLTADRPPELQGVGANQAINQINHFGSFVRFFFNLPPPTDLIPVRMVLTTVDSALHWATGSACGPVHLNCPFRDPLDGSPTNWSSNCLNGLDMWMSNAEPFTKYFQVQSHKSDGVTTGQITEILQVIKEAKKGLLLIGAIHTEDEIWASLLLAKELMWPVVADVLSGVRLRKLFKPFVEKLTHVFVDHLDHALFSDSVRNLIEFDVVIQVGSRITSKRVSQMLEKCFPFAYILVDKHPCRHDPSHLVTHRVQSNIVQFANCVLKSRFPWRRSKLHGHLQALDGAIAREMSFQISAESSLTEPYVAHMLSKALTSKSALFIGNSMPIRDVDMYGCSSENSSHVVDMMLSAELPCQWIQVTGNRGASGIDGLLSSATGFAVGCKKRVVCVVGDISFLHDTNGLAILKQRIARKPMTILVINNRGGGIFRLLPIAKKTEPSVLNQYFYTAHDISIENLCLAHGVRYVHVGTKSELEDALFVPSVEEMDCIVEVESSINANAIVHSTLERFARQAAENSLGIVSASSFLHPMIKNVLLCQVSGIQYSQYRVKLCDRPTICSDEFSQFHREGFILSLTLEDGSIGYGEVAPLNSNVENLMDVEGQLQLVLHLMNEAKFSYMLPLLNGSISSWIWSELGITASSIFPSVRCGLEMALLNAMAVRHDSSLLGILHYQKEENGSAQPHSVQICALLDSEGTPLEVAYVARKLVQEGFSAIKLKVGRRVSSVQDALVMQEVRRAVGVQIELRADANCRWTFEEAREFGLLVNSCNLKYIEEPVQNKDDLIRFHEETGLPVALDETLDDFEECPLRMLTKYTHPGIVAVVIKPSVVGGFENAALIARWAQQHGKMAVISAAYESGLGLSAYILFASYLEMENVKASTEQKQGTPPSVAHGLGTYRWLSEDVMMNTLGIFRSPYSGFVEGFIADASRNLKDVKINNDVIVRTSKGIPVRRYELRVDVDGFSHFIRVHDVGENAEGSVALFLHGFLGTGEEWIPIMTGISGSARCISVDIPGHGRSRVQSHASETQTSPTFSMEMIAEALYKLIEQITPGKVTIVGYSMGARIALYMALRFSNKIEGAVVVSGSPGLKDPVARKIRSATDDSKARMMVDNGLYIFIENWYNGGLWKSLRNHPHFSKIAASRLLHGDVPSVAKLLSDLSSGRQPSLWEELEDCDTNISLVFGEKDVKYKQIATRMYREMSKSKKSVNNIIEIVEIPEAGHAVHLESPLRVILALRKFLTRVHNSSTETELSQKLLLALKEM.

A chloroplast-targeting transit peptide spans 1-19 (MRSSFLVSNPPFLPSLIPR). Residues 20–273 (YSSRKSIRRS…EKSIFQVSSH (254 aa)) form an inactive isochorismate synthase region. Positions 363–933 (NAVWASAIIE…GTKSELEDAL (571 aa)) are 2-succinyl-5-enolpyruvyl-6-hydroxy-3-cyclohexene-1-carboxylate synthase. A helical transmembrane segment spans residues 429 to 449 (AVIITSSGTAVSNLLPAVVEA). Positions 981–1364 (FLHPMIKNVL…SEDVMMNTLG (384 aa)) are O-succinylbenzoate synthase. Lys1170 acts as the Proton donor; for the o-succinylbenzoate synthase activity in catalysis. 3 residues coordinate Mg(2+): Asp1202, Glu1228, and Asp1251. Residue Lys1279 is the Proton acceptor; for the o-succinylbenzoate synthase activity of the active site. Residues 1418–1715 (HFIRVHDVGE…QKLLLALKEM (298 aa)) are 2-succinyl-6-hydroxy-2,4-cyclohexadiene-1-carboxylate synthase. An AB hydrolase-1 domain is found at 1435–1540 (LFLHGFLGTG…EGAVVVSGSP (106 aa)).

In the N-terminal section; belongs to the isochorismate synthase family. The protein in the 2nd section; belongs to the TPP enzyme family. MenD subfamily. It in the 3rd section; belongs to the mandelate racemase/muconate lactonizing enzyme family. MenC type 1 subfamily. This sequence in the C-terminal section; belongs to the AB hydrolase superfamily. MenH family. The cofactor is Mg(2+). Mn(2+) is required as a cofactor. Thiamine diphosphate serves as cofactor.

Its subcellular location is the plastid. It localises to the chloroplast membrane. The enzyme catalyses isochorismate + 2-oxoglutarate + H(+) = 5-enolpyruvoyl-6-hydroxy-2-succinyl-cyclohex-3-ene-1-carboxylate + CO2. It carries out the reaction (1R,6R)-6-hydroxy-2-succinyl-cyclohexa-2,4-diene-1-carboxylate = 2-succinylbenzoate + H2O. It catalyses the reaction 5-enolpyruvoyl-6-hydroxy-2-succinyl-cyclohex-3-ene-1-carboxylate = (1R,6R)-6-hydroxy-2-succinyl-cyclohexa-2,4-diene-1-carboxylate + pyruvate. Its function is as follows. Multifunctional enzyme required for phylloquinone (vitamin K1) biosynthesis. The chain is Protein PHYLLO, chloroplastic (PHYLLO) from Arabidopsis thaliana (Mouse-ear cress).